Consider the following 76-residue polypeptide: Omega-conotoxin-like TxMKLT1-0141 (76 aa).

The first 22 residues, 1–22, serve as a signal peptide directing secretion; that stretch reads MKLTCMMIVAVLFLTAWTFATA. A propeptide spanning residues 23-50 is cleaved from the precursor; it reads DDSSNGLENLFPKAHHEMKNPEASKLNE. 3 cysteine pairs are disulfide-bonded: C52/C67, C59/C70, and C66/C75.

The protein belongs to the conotoxin O1 superfamily. Expressed by the venom duct.

The protein resides in the secreted. Functionally, omega-conotoxins act at presynaptic membranes, they bind and block voltage-gated calcium channels (Cav). In Conus textile (Cloth-of-gold cone), this protein is Omega-conotoxin-like TxMKLT1-0141.